Reading from the N-terminus, the 182-residue chain is Pyruvoyl-dependent arginine decarboxylase (182 aa).

A Pyruvic acid (Ser) modification is found at Ser44.

This sequence belongs to the PdaD family. Pyruvate serves as cofactor.

It catalyses the reaction L-arginine + H(+) = agmatine + CO2. This Picrophilus torridus (strain ATCC 700027 / DSM 9790 / JCM 10055 / NBRC 100828 / KAW 2/3) protein is Pyruvoyl-dependent arginine decarboxylase.